A 266-amino-acid polypeptide reads, in one-letter code: Hemin import ATP-binding protein HmuV (266 aa).

Residues 12–248 enclose the ABC transporter domain; it reads LEASHLHYHV…ETLTQWYQAD (237 aa). 44–51 contributes to the ATP binding site; the sequence is GPNGAGKS.

This sequence belongs to the ABC transporter superfamily. Heme (hemin) importer (TC 3.A.1.14.5) family. The complex is composed of two ATP-binding proteins (HmuV), two transmembrane proteins (HmuU) and a solute-binding protein (HmuT).

The protein resides in the cell inner membrane. Functionally, part of the ABC transporter complex HmuTUV involved in hemin import. Responsible for energy coupling to the transport system. The sequence is that of Hemin import ATP-binding protein HmuV from Yersinia pestis bv. Antiqua (strain Antiqua).